The following is a 488-amino-acid chain: Bifunctional protein GlmU (488 aa).

The interval 1-237 (MPRTRTPLAA…AEEASGVNDR (237 aa)) is pyrophosphorylase. UDP-N-acetyl-alpha-D-glucosamine-binding positions include 13–16 (LAAG), Lys27, Gln82, 87–88 (GT), 110–112 (SGD), Gly149, Glu164, Asn179, and Asn235. A Mg(2+)-binding site is contributed by Asp112. Asn235 contacts Mg(2+). A linker region spans residues 238 to 258 (IELARANRVMVGRLAEAFMRA). Positions 259 to 488 (GVTIEDPARF…KGRPAARRAS (230 aa)) are N-acetyltransferase. Positions 341 and 359 each coordinate UDP-N-acetyl-alpha-D-glucosamine. Residue His371 is the Proton acceptor of the active site. UDP-N-acetyl-alpha-D-glucosamine is bound by residues Tyr374 and Asn385. Acetyl-CoA is bound by residues Ala388, 394–395 (NY), Ser413, Ala431, and Arg448. A disordered region spans residues 459 to 488 (AQRQAEKQMKGTATGPAPARKGRPAARRAS). Basic residues predominate over residues 478–488 (RKGRPAARRAS).

The protein in the N-terminal section; belongs to the N-acetylglucosamine-1-phosphate uridyltransferase family. It in the C-terminal section; belongs to the transferase hexapeptide repeat family. In terms of assembly, homotrimer. The cofactor is Mg(2+).

It localises to the cytoplasm. It catalyses the reaction alpha-D-glucosamine 1-phosphate + acetyl-CoA = N-acetyl-alpha-D-glucosamine 1-phosphate + CoA + H(+). The catalysed reaction is N-acetyl-alpha-D-glucosamine 1-phosphate + UTP + H(+) = UDP-N-acetyl-alpha-D-glucosamine + diphosphate. The protein operates within nucleotide-sugar biosynthesis; UDP-N-acetyl-alpha-D-glucosamine biosynthesis; N-acetyl-alpha-D-glucosamine 1-phosphate from alpha-D-glucosamine 6-phosphate (route II): step 2/2. Its pathway is nucleotide-sugar biosynthesis; UDP-N-acetyl-alpha-D-glucosamine biosynthesis; UDP-N-acetyl-alpha-D-glucosamine from N-acetyl-alpha-D-glucosamine 1-phosphate: step 1/1. It functions in the pathway bacterial outer membrane biogenesis; LPS lipid A biosynthesis. In terms of biological role, catalyzes the last two sequential reactions in the de novo biosynthetic pathway for UDP-N-acetylglucosamine (UDP-GlcNAc). The C-terminal domain catalyzes the transfer of acetyl group from acetyl coenzyme A to glucosamine-1-phosphate (GlcN-1-P) to produce N-acetylglucosamine-1-phosphate (GlcNAc-1-P), which is converted into UDP-GlcNAc by the transfer of uridine 5-monophosphate (from uridine 5-triphosphate), a reaction catalyzed by the N-terminal domain. The sequence is that of Bifunctional protein GlmU from Anaeromyxobacter dehalogenans (strain 2CP-C).